The chain runs to 406 residues: Probable tRNA sulfurtransferase (406 aa).

One can recognise a THUMP domain in the interval 60–166 (DQVMNRLKLV…LNGIFLSSET (107 aa)). ATP is bound by residues 184–185 (MM), 209–210 (HF), arginine 266, glycine 288, and glutamine 297.

The protein belongs to the ThiI family.

The protein resides in the cytoplasm. The catalysed reaction is [ThiI sulfur-carrier protein]-S-sulfanyl-L-cysteine + a uridine in tRNA + 2 reduced [2Fe-2S]-[ferredoxin] + ATP + H(+) = [ThiI sulfur-carrier protein]-L-cysteine + a 4-thiouridine in tRNA + 2 oxidized [2Fe-2S]-[ferredoxin] + AMP + diphosphate. It catalyses the reaction [ThiS sulfur-carrier protein]-C-terminal Gly-Gly-AMP + S-sulfanyl-L-cysteinyl-[cysteine desulfurase] + AH2 = [ThiS sulfur-carrier protein]-C-terminal-Gly-aminoethanethioate + L-cysteinyl-[cysteine desulfurase] + A + AMP + 2 H(+). Its pathway is cofactor biosynthesis; thiamine diphosphate biosynthesis. Functionally, catalyzes the ATP-dependent transfer of a sulfur to tRNA to produce 4-thiouridine in position 8 of tRNAs, which functions as a near-UV photosensor. Also catalyzes the transfer of sulfur to the sulfur carrier protein ThiS, forming ThiS-thiocarboxylate. This is a step in the synthesis of thiazole, in the thiamine biosynthesis pathway. The sulfur is donated as persulfide by IscS. In Limosilactobacillus reuteri subsp. reuteri (strain JCM 1112) (Lactobacillus reuteri), this protein is Probable tRNA sulfurtransferase.